A 545-amino-acid chain; its full sequence is Chaperonin GroEL 2 (545 aa).

Residues 30-33, K51, 87-91, G415, and D496 each bind ATP; these read TLGP and DGTTT.

Belongs to the chaperonin (HSP60) family. In terms of assembly, forms a cylinder of 14 subunits composed of two heptameric rings stacked back-to-back. Interacts with the co-chaperonin GroES.

The protein localises to the cytoplasm. It carries out the reaction ATP + H2O + a folded polypeptide = ADP + phosphate + an unfolded polypeptide.. Its function is as follows. Together with its co-chaperonin GroES, plays an essential role in assisting protein folding. The GroEL-GroES system forms a nano-cage that allows encapsulation of the non-native substrate proteins and provides a physical environment optimized to promote and accelerate protein folding. The sequence is that of Chaperonin GroEL 2 from Nitrobacter winogradskyi (strain ATCC 25391 / DSM 10237 / CIP 104748 / NCIMB 11846 / Nb-255).